An 836-amino-acid polypeptide reads, in one-letter code: MSDVDMESGSDDSGMEDLDEEIQKIKQKMIDDSQSVVLANQLLILLRKNGDFDELDIKRRQFVEWAPLNPLNWKNWIEDFQNRKPEPSVAEVEEMFEKALFDENDVTIWVERAMYAYKVANDKNKKEDFKFCRDVCSKALENLGTRYDSGGHIWLIFLEYEMSYLKNSMNAPDYQRLADQVFALFERALHCPTDQLEDVYVLAEQFCTEFKQHHKLEELKKTYNSTMRQKEQLSKFEELIQQEETKKQGLKQFFDHEKKSGIPSRIKMAHERLVSELDDDEEAWIAYGAWADIELKLPQVAVKVYSRALRHCPYSFVLHQQALLAFERDRRPNEEIDALWERARSNVINSAEEGRSLYRTYAFLLRRRIHLTGSSDYSPMAEVFDEGAALLREWFSMAWDTTADYRQMQAYFYASLMKNMDKCRNIWNDILASGFGRFAGKWIEAVRLERQFGDKENARKYLNKALNSVSDNINEIYMYYVQFEREEGTLAELDLVLEKVNSQVAHRAIRPQKKVSEKPAPAPKSKQDHIQKRTSGGEPIVKKVKGDDGGFKAPLPPSNAKSSSAVSSSNASSTPAPGSFAVQKAAPGTEDARTIFVSNLDFTTTEDEIRQAIEGVASIRFARKANSDLVHRGFAYVVMENDQKAQQALLKDRVPVKGRPMFISANDPEKRVGFKFSTTLEKSKVFVRNVHFQATDDELKALFSKFGTVTSVRRVTHKDGKPKGIAFVDFDTEASAQKCVASGDKLMLRERELEVALSNPPVKKDKSHGKPAAIGASLEEDGPRKGHAAKLQLVPRAITNKTPQITARLDAMDVSEGTSTSQPLSNDQFRKMFMKN.

HAT repeat units follow at residues 127–163, 296–329, 331–367, 418–451, and 453–486; these read EDFK…YEMS, KLPQ…FERD, RPNE…LLRR, KNMD…LERQ, and GDKE…FERE. The interval 507-585 is disordered; it reads RAIRPQKKVS…APGSFAVQKA (79 aa). The span at 540–550 shows a compositional bias: basic and acidic residues; it reads IVKKVKGDDGG. The span at 558 to 579 shows a compositional bias: low complexity; it reads SNAKSSSAVSSSNASSTPAPGS. 2 RRM domains span residues 593-668 and 683-760; these read RTIF…ANDP and SKVF…LSNP. Disordered regions lie at residues 757-786 and 811-830; these read LSNP…PRKG and AMDV…DQFR. Residues 816-827 are compositionally biased toward polar residues; the sequence is EGTSTSQPLSND.

In terms of assembly, forms a complex composed of sart-3, terminal uridylyltransferase usip-1 and U6 snRNA; complex formation is mediated by usip-1 and sart-3 binding to U6 snRNA. Associates with U4 and U6 snRNP complexes, probably by interacting with U4 and U6 snRNAs. In terms of tissue distribution, ubiquitously expressed.

The protein resides in the nucleus. It is found in the nucleoplasm. In terms of biological role, U6 snRNP-binding protein that functions as a recycling factor of the splicing machinery. Promotes the initial reassembly of U4 and U6 snRNPs following their ejection from the spliceosome during its maturation. The chain is Spliceosome associated factor 3, U4/U6 recycling protein from Caenorhabditis elegans.